The chain runs to 493 residues: Galactose-1-phosphate uridylyltransferase 2 (493 aa).

Belongs to the galactose-1-phosphate uridylyltransferase type 2 family.

The protein localises to the cytoplasm. It catalyses the reaction alpha-D-galactose 1-phosphate + UDP-alpha-D-glucose = alpha-D-glucose 1-phosphate + UDP-alpha-D-galactose. Its pathway is carbohydrate metabolism; galactose metabolism. This chain is Galactose-1-phosphate uridylyltransferase 2 (galT2), found in Streptococcus pneumoniae serotype 4 (strain ATCC BAA-334 / TIGR4).